A 340-amino-acid chain; its full sequence is N-acetyl-gamma-glutamyl-phosphate reductase (340 aa).

Cysteine 149 is an active-site residue.

The protein belongs to the NAGSA dehydrogenase family. Type 1 subfamily.

It is found in the cytoplasm. It catalyses the reaction N-acetyl-L-glutamate 5-semialdehyde + phosphate + NADP(+) = N-acetyl-L-glutamyl 5-phosphate + NADPH + H(+). It participates in amino-acid biosynthesis; L-arginine biosynthesis; N(2)-acetyl-L-ornithine from L-glutamate: step 3/4. Catalyzes the NADPH-dependent reduction of N-acetyl-5-glutamyl phosphate to yield N-acetyl-L-glutamate 5-semialdehyde. The protein is N-acetyl-gamma-glutamyl-phosphate reductase of Ruthia magnifica subsp. Calyptogena magnifica.